A 313-amino-acid polypeptide reads, in one-letter code: Glyoxylate/hydroxypyruvate reductase A (313 aa).

Arginine 228 is a catalytic residue. The active-site Proton donor is the histidine 276.

This sequence belongs to the D-isomer specific 2-hydroxyacid dehydrogenase family. GhrA subfamily.

It localises to the cytoplasm. It carries out the reaction glycolate + NADP(+) = glyoxylate + NADPH + H(+). The enzyme catalyses (R)-glycerate + NAD(+) = 3-hydroxypyruvate + NADH + H(+). It catalyses the reaction (R)-glycerate + NADP(+) = 3-hydroxypyruvate + NADPH + H(+). In terms of biological role, catalyzes the NADPH-dependent reduction of glyoxylate and hydroxypyruvate into glycolate and glycerate, respectively. This chain is Glyoxylate/hydroxypyruvate reductase A, found in Serratia proteamaculans (strain 568).